Here is a 136-residue protein sequence, read N- to C-terminus: Endonuclease II (136 aa).

Residues 32-131 form the GIY-YIG domain; sequence KYNVIYAIAI…IKLFNPPWNI (100 aa).

Homotetramer. It depends on Mg(2+) as a cofactor.

The enzyme catalyses Endonucleolytic nicking and cleavage of cytosine-containing double-stranded DNA.. In terms of biological role, contributes to the degradation of host DNA, permitting the scavenging of host-derived nucleotides for phage DNA synthesis. Sequence-specific endonuclease. Catalyzes nicking of the bottom strand of double-stranded DNA between the first and second base pair to the right of a top-strand CCGC motif. Does not cleave native phage DNA, which contains 5-hydroxymethylcytosine instead of cytosine. This is Endonuclease II (denA) from Escherichia coli (Bacteriophage T4).